A 527-amino-acid chain; its full sequence is (3S)-3-amino-3-(3-chloro-4-hydroxyphenyl)propanoyl-[peptidyl-carrier protein SgcC2] monooxygenase (527 aa).

Basic and acidic residues predominate over residues 1–10 (MPHGAEREAS). Positions 1 to 22 (MPHGAEREASPAEESAGTRPLT) are disordered. Residues 161 to 163 (HAF), 167 to 170 (PVDR), and Thr-202 contribute to the FAD site.

The protein belongs to the FADH(2)-utilizing monooxygenase family. Homotetramer.

The catalysed reaction is (3S)-3-amino-3-(3-chloro-4-hydroxyphenyl)propanoyl-[SgcC2 peptidyl-carrier protein] + FADH2 + O2 = (3S)-3-amino-3-(3-chloro-4,5-dihydroxyphenyl)propanoyl-[SgcC2 peptidyl-carrier protein] + FAD + H2O + H(+). Its pathway is antibiotic biosynthesis. The SgcE6-SgcC hydroxylation activity decreases in the presence of excess FAD. In terms of biological role, oxygenase component of a two-component system involved in the biosynthesis of the enediyne antitumor antibiotic C-1027. Uses FADH(2) supplied by SgcE6 to catalyze the C-5 hydroxylation of (S)-3-chloro-beta-tyrosyl-S-SgcC2. Can also efficiently catalyze the regioselective hydroxylation of other 3-substituted beta-tyrosyl-S-SgcC2 analogs, including the bromo-, iodo-, fluoro-, and methyl-substituted analogs, but does not accept 3-hydroxy-beta-tyrosyl-S-SgcC2 as a substrate. Is only active with SgcC2 (peptidyl carrier protein)-tethered substrates. The polypeptide is (3S)-3-amino-3-(3-chloro-4-hydroxyphenyl)propanoyl-[peptidyl-carrier protein SgcC2] monooxygenase (Streptomyces globisporus).